Reading from the N-terminus, the 209-residue chain is Probable transcriptional regulator ycf29 (209 aa).

The 117-residue stretch at Asn-4–Ile-120 folds into the Response regulatory domain. The residue at position 53 (Asp-53) is a 4-aspartylphosphate. One can recognise an HTH luxR-type domain in the interval Pro-139–Asn-204.

The protein resides in the plastid. It localises to the chloroplast. This is Probable transcriptional regulator ycf29 (ycf29) from Porphyra purpurea (Red seaweed).